Consider the following 322-residue polypeptide: Ferredoxin--NADP reductase (322 aa).

Residues glutamate 37, glutamine 45, tyrosine 50, isoleucine 91, phenylalanine 128, and aspartate 290 each contribute to the FAD site.

It belongs to the ferredoxin--NADP reductase type 2 family. As to quaternary structure, homodimer. FAD serves as cofactor.

It carries out the reaction 2 reduced [2Fe-2S]-[ferredoxin] + NADP(+) + H(+) = 2 oxidized [2Fe-2S]-[ferredoxin] + NADPH. In Malacoplasma penetrans (strain HF-2) (Mycoplasma penetrans), this protein is Ferredoxin--NADP reductase.